The following is a 413-amino-acid chain: Multifunctional CCA protein (413 aa).

ATP is bound by residues Gly-8 and Arg-11. Residues Gly-8 and Arg-11 each contribute to the CTP site. 2 residues coordinate Mg(2+): Asp-21 and Asp-23. ATP contacts are provided by Arg-91, Arg-143, and Arg-146. CTP-binding residues include Arg-91, Arg-143, and Arg-146. The region spanning 232–333 (TGVHVMMVVD…VRFFERTDAL (102 aa)) is the HD domain.

This sequence belongs to the tRNA nucleotidyltransferase/poly(A) polymerase family. Bacterial CCA-adding enzyme type 1 subfamily. Monomer. Can also form homodimers and oligomers. Requires Mg(2+) as cofactor. It depends on Ni(2+) as a cofactor.

It catalyses the reaction a tRNA precursor + 2 CTP + ATP = a tRNA with a 3' CCA end + 3 diphosphate. The catalysed reaction is a tRNA with a 3' CCA end + 2 CTP + ATP = a tRNA with a 3' CCACCA end + 3 diphosphate. In terms of biological role, catalyzes the addition and repair of the essential 3'-terminal CCA sequence in tRNAs without using a nucleic acid template. Adds these three nucleotides in the order of C, C, and A to the tRNA nucleotide-73, using CTP and ATP as substrates and producing inorganic pyrophosphate. tRNA 3'-terminal CCA addition is required both for tRNA processing and repair. Also involved in tRNA surveillance by mediating tandem CCA addition to generate a CCACCA at the 3' terminus of unstable tRNAs. While stable tRNAs receive only 3'-terminal CCA, unstable tRNAs are marked with CCACCA and rapidly degraded. The protein is Multifunctional CCA protein of Burkholderia multivorans (strain ATCC 17616 / 249).